Consider the following 465-residue polypeptide: Botryococcus squalene synthase (465 aa).

Residues arginine 48 and arginine 73 each coordinate NADP(+). Mg(2+)-binding residues include aspartate 76, glutamate 79, and aspartate 80. NADP(+) contacts are provided by arginine 215, lysine 315, and arginine 317. 2 helical membrane-spanning segments follow: residues 395–415 and 429–449; these read AIRLLLLVGVVAYFAYAFNLG and ILDLSQKGLAVASVALLLLVL.

It belongs to the phytoene/squalene synthase family.

It localises to the membrane. The catalysed reaction is presqualene diphosphate + NADPH + H(+) = squalene + diphosphate + NADP(+). Its function is as follows. Produces squalene when coexpressed with SSL-1 and bisfarnesyl ether and a very small amount of squalene when incubated alone in the presence of NADPH. This is Botryococcus squalene synthase (SSL-2) from Botryococcus braunii (Green alga).